Here is a 319-residue protein sequence, read N- to C-terminus: uncharacterized protein (319 aa).

Residues 270–290 (AAALWWIPAWLAMIVEVAVLG) traverse the membrane as a helical segment.

It is found in the membrane. This is an uncharacterized protein from Mycobacterium tuberculosis (strain CDC 1551 / Oshkosh).